Consider the following 192-residue polypeptide: Ion-translocating oxidoreductase complex subunit A (192 aa).

Transmembrane regions (helical) follow at residues 5–25 (LLLLIGTVLVNNFVLVKFLGL), 38–58 (AIGMSMATTFVLTLASVLSFL), 72–92 (LRTMSFILVIAVVVQFTEMLV), 102–122 (ALGIYLPLITTNCAVLGVALL), 134–154 (AIYGFGAAVGFSMVLILFSAM), and 171–191 (AIAMITAGLMSLAFMGFAGLI).

Belongs to the NqrDE/RnfAE family. As to quaternary structure, the complex is composed of six subunits: RnfA, RnfB, RnfC, RnfD, RnfE and RnfG.

The protein resides in the cell inner membrane. Its function is as follows. Part of a membrane-bound complex that couples electron transfer with translocation of ions across the membrane. This chain is Ion-translocating oxidoreductase complex subunit A, found in Shewanella denitrificans (strain OS217 / ATCC BAA-1090 / DSM 15013).